The primary structure comprises 554 residues: Perforin-1 (554 aa).

A signal peptide spans 1 to 20; the sequence is MAAYLFLLGLFLLLPRPVPA. 3 disulfides stabilise this stretch: cysteine 22-cysteine 75, cysteine 30-cysteine 72, and cysteine 101-cysteine 175. One can recognise an MACPF domain in the interval 26 to 374; the sequence is TRSECKQNHK…HYVMSRARWR (349 aa). Residues 128–148 traverse the membrane as a beta stranded segment; the sequence is WRAGLDVNPKPEANVHVSVAG. An N-linked (GlcNAc...) asparagine glycan is attached at asparagine 204. 4 disulfides stabilise this stretch: cysteine 241–cysteine 407, cysteine 376–cysteine 392, cysteine 380–cysteine 394, and cysteine 396–cysteine 406. The chain crosses the membrane as a beta stranded span at residues 256-278; it reads CLSVEAQVSIGAQASVSSEYKAC. Residues 375–407 form the EGF-like domain; the sequence is DCNRPCRAGQHKSSRDSCQCVCQDSNVTNQDCC. Residues 395 to 513 form the C2 domain; the sequence is VCQDSNVTNQ…FHEVNCPLNH (119 aa). Asparagine 400 is a glycosylation site (N-linked (GlcNAc...) asparagine). Residues glycine 428, aspartate 429, threonine 432, aspartate 435, asparagine 454, aspartate 483, alanine 484, aspartate 485, tryptophan 488, aspartate 489, aspartate 490, and aspartate 491 each contribute to the Ca(2+) site. Disulfide bonds link cysteine 496/cysteine 509 and cysteine 524/cysteine 533. A glycan (N-linked (GlcNAc...) asparagine) is linked at asparagine 548.

This sequence belongs to the complement C6/C7/C8/C9 family. In terms of assembly, monomer, as soluble protein. Homooligomer; homooligomerizes to form a pore-forming ring. It depends on Ca(2+) as a cofactor. In terms of processing, N-glycosylated. In terms of tissue distribution, detected in large granular lymphocytes and lymphokine-activated killer cells.

The protein localises to the cytolytic granule. Its subcellular location is the secreted. The protein resides in the cell membrane. It localises to the endosome lumen. Pore-forming protein that plays a key role in granzyme-mediated programmed cell death, and in defense against virus-infected or neoplastic cells. Can insert into the membrane of target cells in its calcium-bound form, oligomerize and form large pores. Promotes cytolysis and apoptosis of target cells by mediating the passage and uptake of cytotoxic granzymes. Facilitates the delivery of cationic cargo protein, while anionic or neural proteins are not delivered efficiently. Perforin pores allow the release of mature caspase-7 (CASP7) into the extracellular milieu. The protein is Perforin-1 (Prf1) of Rattus norvegicus (Rat).